Here is a 167-residue protein sequence, read N- to C-terminus: Small ribosomal subunit protein uS5 (167 aa).

The 64-residue stretch at 11-74 (LQEKLIAVNR…EKARRNMINV (64 aa)) folds into the S5 DRBM domain.

The protein belongs to the universal ribosomal protein uS5 family. In terms of assembly, part of the 30S ribosomal subunit. Contacts proteins S4 and S8.

Functionally, with S4 and S12 plays an important role in translational accuracy. In terms of biological role, located at the back of the 30S subunit body where it stabilizes the conformation of the head with respect to the body. The protein is Small ribosomal subunit protein uS5 of Escherichia coli O139:H28 (strain E24377A / ETEC).